The following is a 517-amino-acid chain: MAALGPSSQNVTEYVVRVPKNTTKKYNIMAFNAADKVNLTTWNQARLERDLSNKKIYQEEEMPESGAGSEFNRKLREEARRKKYGIVLKEFRPEDQPWLLRVNGKSGRKFKGIKKGGVTENTSYYIFTQCPDGAFEAFPVHNWYNFTPLAKHRTLTAEEAEEEWERRNKVLNHFSIMQQRRLKDQDQDEEDEEKEKRSRKKASELRIHDLEDDLEMSSDDSEASGEEGGRAPKAKKKAPPSKGGRKKKKKKGSDDEAFEDSDDGDFEGQEVDYMSDGSSSSQDELEGKPKATQQEEGPKGVDEQSESSEESEEEKPPEEDKEEEEEKKAPTPQEKKRRKDSSEESDSSEESDIDSEASSALFMAKKKTPPKRERKPSGGSSRGNSRPGTPSTEAGSTSSTLRAAASKLEQGKRTSETPAAKRLRLDTGPQSLSGKSTPQPQSGKSTPSSGDVQVTEDAVRRYLTRKPMTTKDLLKKFQTKKTGLSSEQTVNVLAQILKRLNPERKMINDKMHFSLKE.

Residue A2 is modified to N-acetylalanine. Residue T156 is modified to Phosphothreonine. Residues Q178–A458 are disordered. Positions L210–G225 are enriched in acidic residues. 4 positions are modified to phosphoserine: S217, S218, S221, and S224. Basic residues predominate over residues P232–K251. Acidic residues-rich tracts occupy residues D255 to E270 and E303 to E325. Phosphothreonine is present on T331. Residues E343–S355 are compositionally biased toward acidic residues. Residues A364–R374 show a composition bias toward basic residues. S377, S380, S381, and S385 each carry phosphoserine. The span at S377–S391 shows a compositional bias: low complexity. T389 carries the phosphothreonine modification. S391 bears the Phosphoserine mark. Over residues T392–L401 the composition is skewed to polar residues. K407 carries the post-translational modification N6-acetyllysine. Residues G428 to V452 are compositionally biased toward polar residues. 3 positions are modified to phosphoserine: S431, S433, and S436. A phosphothreonine mark is found at T437 and T446. Residue S449 is modified to Phosphoserine.

This sequence belongs to the TFIIF alpha subunit family. As to quaternary structure, heterodimer of an alpha and a beta subunit. Interacts with GTF2F2, CTDP1, TAF6/TAFII80 and URI1. Interacts with GTF2B (via C-terminus and preferentially via acetylated form); this interaction prevents binding of GTF2B to GTF2F2. Part of TBP-based Pol II pre-initiation complex (PIC), in which Pol II core assembles with general transcription factors and other specific initiation factors including GTF2E1, GTF2E2, GTF2F1, GTF2F2, TCEA1, ERCC2, ERCC3, GTF2H2, GTF2H3, GTF2H4, GTF2H5, GTF2A1, GTF2A2, GTF2B and TBP; this large multi-subunit PIC complex mediates DNA unwinding and targets Pol II core to the transcription start site where the first phosphodiester bond forms. Phosphorylated on Ser and other residues by TAF1 and casein kinase II-like kinases.

The protein resides in the nucleus. Functionally, TFIIF is a general transcription initiation factor that binds to RNA polymerase II and helps to recruit it to the initiation complex in collaboration with TFIIB. It promotes transcription elongation. The polypeptide is General transcription factor IIF subunit 1 (GTF2F1) (Bos taurus (Bovine)).